The following is a 213-amino-acid chain: tRNA (guanine-N(7)-)-methyltransferase (213 aa).

4 residues coordinate S-adenosyl-L-methionine: Glu-44, Glu-69, Asp-96, and Asp-118. Asp-118 is an active-site residue. Substrate contacts are provided by residues Lys-122, Asp-154, and 191 to 194 (TEYE).

Belongs to the class I-like SAM-binding methyltransferase superfamily. TrmB family.

The enzyme catalyses guanosine(46) in tRNA + S-adenosyl-L-methionine = N(7)-methylguanosine(46) in tRNA + S-adenosyl-L-homocysteine. Its pathway is tRNA modification; N(7)-methylguanine-tRNA biosynthesis. In terms of biological role, catalyzes the formation of N(7)-methylguanine at position 46 (m7G46) in tRNA. This Exiguobacterium sibiricum (strain DSM 17290 / CCUG 55495 / CIP 109462 / JCM 13490 / 255-15) protein is tRNA (guanine-N(7)-)-methyltransferase.